A 455-amino-acid polypeptide reads, in one-letter code: Venom prothrombin activator hopsarin-D (455 aa).

Residues methionine 1 to alanine 20 form the signal peptide. A propeptide spanning residues glutamate 21–arginine 40 is cleaved from the precursor. In terms of domain architecture, Gla spans serine 41–aspartate 86. A 4-carboxyglutamate mark is found at glutamate 46, glutamate 47, glutamate 54, glutamate 56, glutamate 59, glutamate 60, glutamate 65, glutamate 66, glutamate 69, glutamate 72, and glutamate 75. Cysteine 57 and cysteine 62 form a disulfide bridge. An EGF-like 1; calcium-binding domain is found at aspartate 86–cysteine 121. 10 disulfides stabilise this stretch: cysteine 90/cysteine 101, cysteine 95/cysteine 110, cysteine 112/cysteine 121, cysteine 129/cysteine 140, cysteine 136/cysteine 149, cysteine 151/cysteine 164, cysteine 172/cysteine 328, cysteine 236/cysteine 252, cysteine 376/cysteine 390, and cysteine 401/cysteine 429. The O-linked (Hex...) serine glycan is linked to serine 92. Residues cysteine 129 to cysteine 164 enclose the EGF-like 2 domain. A propeptide spans arginine 182–arginine 209 (activation peptide). Residues isoleucine 210 to serine 453 form the Peptidase S1 domain. Histidine 251 serves as the catalytic Charge relay system. Residue asparagine 254 is glycosylated (N-linked (GlcNAc...) asparagine). Aspartate 308 (charge relay system) is an active-site residue. Serine 405 acts as the Charge relay system in catalysis.

It belongs to the peptidase S1 family. Snake venom subfamily. As to quaternary structure, heterodimer of a light chain and a heavy chain; disulfide-linked. The vitamin K-dependent, enzymatic carboxylation of some glutamate residues allows the modified protein to bind calcium. Expressed by the venom gland.

It is found in the secreted. The enzyme catalyses Selective cleavage of Arg-|-Thr and then Arg-|-Ile bonds in prothrombin to form thrombin.. Functionally, snake prothrombin activator that attacks the hemostatic system of prey. This protein is functionally similar to blood coagulation factor Xa. The procoagulant activity of hopsarin-D is approximately 10-fold lower than that of trocarin-D and FXa. The sequence is that of Venom prothrombin activator hopsarin-D from Hoplocephalus stephensii (Stephens's banded snake).